Reading from the N-terminus, the 300-residue chain is Cytochrome f (300 aa).

An N-terminal signal peptide occupies residues 1–32 (MMTYLSKQFSKLLFGQLLFLFIGNLLLKPVQA). The heme site is built by Y33, C53, C56, and H57. Residues 267–287 (LKTFIAFCVTVFIGQLAFVLK) traverse the membrane as a helical segment.

This sequence belongs to the cytochrome f family. As to quaternary structure, the 4 large subunits of the cytochrome b6-f complex are cytochrome b6, subunit IV (17 kDa polypeptide, petD), cytochrome f and the Rieske protein, while the 4 small subunits are PetG, PetL, PetM and PetN. The complex functions as a dimer. Heme serves as cofactor.

The protein localises to the plastid. It is found in the chloroplast thylakoid membrane. Its function is as follows. Component of the cytochrome b6-f complex, which mediates electron transfer between photosystem II (PSII) and photosystem I (PSI), cyclic electron flow around PSI, and state transitions. The sequence is that of Cytochrome f from Cyanidioschyzon merolae (strain NIES-3377 / 10D) (Unicellular red alga).